A 501-amino-acid chain; its full sequence is MVRKPVVSTISKGGYLQGNVNGRLPSLGNKEPPGQEKVQLKRKVTLLRGVSIIIGTIIGAGIFISPKGVLQNTGSVGMSLTIWTVCGVLSLFGALSYAELGTTIKKSGGHYTYILEVFGPLPAFVRVWVELLIIRPAATAVISLAFGRYILEPFFIQCEIPELAIKLITAVGITVVMVLNSMSVSWSARIQIFLTFCKLTAILIIIVPGVMQLIKGQTQNFKDAFSGRDSSITRLPLAFYYGMYAYAGWFYLNFVTEEVENPEKTIPLAICISMAIVTIGYVLTNVAYFTTINAEELLLSNAVAVTFSERLLGNFSLAVPIFVALSCFGSMNGGVFAVSRLFYVASREGHLPEILSMIHVRKHTPLPAVIVLHPLTMIMLFSGDLDSLLNFLSFARWLFIGLAVAGLIYLRYKCPDMHRPFKVPLFIPALFSFTCLFMVALSLYSDPFSTGIGFVITLTGVPAYYLFIIWDKKPRWFRIMSEKITRTLQIILEVVPEEDKL.

Residues 1–43 (MVRKPVVSTISKGGYLQGNVNGRLPSLGNKEPPGQEKVQLKRK) lie on the Cytoplasmic side of the membrane. The residue at position 26 (S26) is a Phosphoserine. Residues 44 to 64 (VTLLRGVSIIIGTIIGAGIFI) form a helical membrane-spanning segment. The Extracellular segment spans residues 65–74 (SPKGVLQNTG). A helical membrane pass occupies residues 75–95 (SVGMSLTIWTVCGVLSLFGAL). The Cytoplasmic segment spans residues 96-101 (SYAELG). An intramembrane segment occupies 102 to 116 (TTIKKSGGHYTYILE). The Cytoplasmic portion of the chain corresponds to 117 to 130 (VFGPLPAFVRVWVE). A helical membrane pass occupies residues 131–150 (LLIIRPAATAVISLAFGRYI). Residue R135 coordinates L-glutamate. Residues 151–163 (LEPFFIQCEIPEL) are Extracellular-facing. A helical membrane pass occupies residues 164–179 (AIKLITAVGITVVMVL). The Cytoplasmic segment spans residues 180-193 (NSMSVSWSARIQIF). Residues 194 to 210 (LTFCKLTAILIIIVPGV) traverse the membrane as a helical segment. Topologically, residues 211-234 (MQLIKGQTQNFKDAFSGRDSSITR) are extracellular. Residues 235-255 (LPLAFYYGMYAYAGWFYLNFV) traverse the membrane as a helical segment. Residue Y244 coordinates L-glutamate. The Cytoplasmic portion of the chain corresponds to 256–265 (TEEVENPEKT). A helical membrane pass occupies residues 266 to 286 (IPLAICISMAIVTIGYVLTNV). At 287–317 (AYFTTINAEELLLSNAVAVTFSERLLGNFSL) the chain is on the extracellular side. An N-linked (GlcNAc...) asparagine glycan is attached at N314. A helical membrane pass occupies residues 318-338 (AVPIFVALSCFGSMNGGVFAV). Over 339–364 (SRLFYVASREGHLPEILSMIHVRKHT) the chain is Cytoplasmic. The helical transmembrane segment at 365–385 (PLPAVIVLHPLTMIMLFSGDL) threads the bilayer. Over 386-387 (DS) the chain is Extracellular. A helical membrane pass occupies residues 388–408 (LLNFLSFARWLFIGLAVAGLI). Topologically, residues 409-422 (YLRYKCPDMHRPFK) are cytoplasmic. The helical transmembrane segment at 423–443 (VPLFIPALFSFTCLFMVALSL) threads the bilayer. Topologically, residues 444 to 449 (YSDPFS) are extracellular. Residues 450–470 (TGIGFVITLTGVPAYYLFIIW) form a helical membrane-spanning segment. Residues 471–501 (DKKPRWFRIMSEKITRTLQIILEVVPEEDKL) lie on the Cytoplasmic side of the membrane.

This sequence belongs to the amino acid-polyamine-organocation (APC) superfamily. L-type amino acid transporter (LAT) (TC 2.A.3.8) family. Disulfide-linked heterodimer with the amino acid transport protein SLC3A2/4F2hc; this interaction mediates cell membrane localization. Ubiquitinated by TRIM26; leading to proteasomal degradation. Expressed in term placenta and primary term cytotrophoblast. Expressed mainly in the brain, but also in pancreas.

The protein resides in the cell membrane. It localises to the cell projection. Its subcellular location is the microvillus membrane. It catalyses the reaction L-cystine(out) + L-glutamate(in) = L-cystine(in) + L-glutamate(out). The catalysed reaction is an L-alpha-amino acid(in) + L-kynurenine(out) = an L-alpha-amino acid(out) + L-kynurenine(in). It carries out the reaction N-acetyl-L-cysteine(out) + L-glutamate(in) = N-acetyl-L-cysteine(in) + L-glutamate(out). Inhibited by erastin and sulfasalazine. Inhibited by (S)-lactate. Inactivated by p-chloromercuribenzoic acid and p-chloromercuribenzenesulfonic acid. In terms of biological role, heterodimer with SLC3A2, that functions as an antiporter by mediating the exchange of extracellular anionic L-cystine and intracellular L-glutamate across the cellular plasma membrane. Provides L-cystine for the maintenance of the redox balance between extracellular L-cystine and L-cysteine and for the maintenance of the intracellular levels of glutathione that is essential for cells protection from oxidative stress. The transport is sodium-independent, electroneutral with a stoichiometry of 1:1, and is drove by the high intracellular concentration of L-glutamate and the intracellular reduction of L-cystine. In addition, mediates the import of L-kynurenine leading to anti-ferroptotic signaling propagation required to maintain L-cystine and glutathione homeostasis. Moreover, mediates N-acetyl-L-cysteine uptake into the placenta leading to subsequently down-regulation of pathways associated with oxidative stress, inflammation and apoptosis. In vitro can also transport L-aspartate. May participate in astrocyte and meningeal cell proliferation during development and can provide neuroprotection by promoting glutathione synthesis and delivery from non-neuronal cells such as astrocytes and meningeal cells to immature neurons. Controls the production of pheomelanin pigment directly. The protein is Cystine/glutamate transporter of Homo sapiens (Human).